The primary structure comprises 315 residues: Non-structural protein 2 (315 aa).

ATP is bound by residues 106–108, lysine 187, and 220–222; these read SVR and HGK. The tract at residues 204–240 is RNA-binding; that stretch reads LVAELRWQYNKFAVITHGKGHYRVVRYSTVANHADRV. The active-site For NTPase and RTPase activities is histidine 224. Arginine 226 contacts ATP.

Belongs to the rotavirus NSP2 family. In terms of assembly, homooctamer. Interacts with VP1; this interaction is weak. Interacts with NSP5; this interaction leads to up-regulation of NSP5 phosphorylation and formation of viral factories. Interacts with host DCP1A, DCP1B, DDX6, EDC4 and EIF2S1/eIF2-alpha; these interactions are probably part of the sequestration of some host SGs and PBs proteins in viral factories. The cofactor is Mg(2+).

It is found in the host cytoplasm. Its function is as follows. Participates in replication and packaging of the viral genome. Plays a crucial role, together with NSP5, in the formation of virus factories (viroplasms), which are large inclusions in the host cytoplasm where replication intermediates are assembled and viral RNA replication takes place. Displays ssRNA binding, NTPase, RNA triphosphatase (RTPase) and ATP-independent helix-unwinding activities. The unwinding activity may prepare and organize plus-strand RNAs for packaging and replication by removing interfering secondary structures. The RTPase activity plays a role in the removal of the gamma-phosphate from the rotavirus RNA minus strands of dsRNA genome segments. Participates in the selective exclusion of host proteins from stress granules (SG) and P bodies (PB). Also participates in the sequestration of these remodeled organelles in viral factories. The chain is Non-structural protein 2 from Aves (RV-A).